The following is a 670-amino-acid chain: DNA ligase (670 aa).

NAD(+) is bound by residues aspartate 33–aspartate 37, serine 82–leucine 83, and glutamate 114. Catalysis depends on lysine 116, which acts as the N6-AMP-lysine intermediate. Positions 137, 174, 291, and 315 each coordinate NAD(+). Residues cysteine 409, cysteine 412, cysteine 427, and cysteine 433 each coordinate Zn(2+). The 78-residue stretch at glycine 593–lysine 670 folds into the BRCT domain.

Belongs to the NAD-dependent DNA ligase family. LigA subfamily. Mg(2+) serves as cofactor. It depends on Mn(2+) as a cofactor.

It carries out the reaction NAD(+) + (deoxyribonucleotide)n-3'-hydroxyl + 5'-phospho-(deoxyribonucleotide)m = (deoxyribonucleotide)n+m + AMP + beta-nicotinamide D-nucleotide.. DNA ligase that catalyzes the formation of phosphodiester linkages between 5'-phosphoryl and 3'-hydroxyl groups in double-stranded DNA using NAD as a coenzyme and as the energy source for the reaction. It is essential for DNA replication and repair of damaged DNA. In Vibrio campbellii (strain ATCC BAA-1116), this protein is DNA ligase.